A 106-amino-acid polypeptide reads, in one-letter code: Replication protein A 14 kDa subunit B (106 aa).

Methionine 1 bears the N-acetylmethionine mark.

It belongs to the replication factor A protein 3 family. As to quaternary structure, component of the heterotrimeric canonical replication protein A complex (RPA).

It is found in the nucleus. Functionally, as part of the replication protein A (RPA/RP-A), a single-stranded DNA-binding heterotrimeric complex, may play an essential role in DNA replication, recombination and repair. Binds and stabilizes single-stranded DNA intermediates, preventing complementary DNA reannealing and recruiting different proteins involved in DNA metabolism. This chain is Replication protein A 14 kDa subunit B (RPA3B), found in Arabidopsis thaliana (Mouse-ear cress).